The following is an 868-amino-acid chain: Metabotropic glutamate receptor 6 (868 aa).

A signal peptide spans 1–20; it reads MARLLLALLAWLAQMSPVRA. Residues 21-576 are Extracellular-facing; it reads AGSVRLAGGL…VVRLTWSSPW (556 aa). Cys48 and Cys90 are oxidised to a cystine. L-glutamate contacts are provided by residues Ser145, 166 to 168, and Tyr216; that span reads AST. Disulfide bonds link Cys235–Cys527, Cys358–Cys374, Cys414–Cys421, Cys509–Cys528, Cys513–Cys531, Cys534–Cys546, and Cys549–Cys562. Asn287 carries N-linked (GlcNAc...) asparagine glycosylation. L-glutamate is bound at residue Asp298. Lys391 is a binding site for L-glutamate. 2 N-linked (GlcNAc...) asparagine glycosylation sites follow: Asn442 and Asn470. Residue Asn558 is glycosylated (N-linked (GlcNAc...) asparagine). Residues 577 to 599 form a helical membrane-spanning segment; sequence AAPPLLLAVLGIMATTTVVGTFV. At 600–613 the chain is on the cytoplasmic side; sequence RHNNTPIVRASGRE. A helical transmembrane segment spans residues 614 to 634; it reads LSYVLLTGIFLIYAVTFLMVA. Over 635 to 645 the chain is Extracellular; it reads EPGAAVCATRR. Residues 646 to 664 form a helical membrane-spanning segment; the sequence is LFLGLGTTLSYSALLTKTN. The Cytoplasmic segment spans residues 665-688; the sequence is RIYRIFEQGKRSVTPPPFISPTSQ. The chain crosses the membrane as a helical span at residues 689–709; it reads LVITFSLTSLQVVGVIAWLGA. The Extracellular segment spans residues 710–739; it reads QPPHSVIDYEEQRTVDPEQARGVLKCDMSD. A helical transmembrane segment spans residues 740-761; the sequence is LSLIGCLGYSLLLMVTCTVYAI. At 762–774 the chain is on the cytoplasmic side; it reads KARGVPETFNEAK. A helical transmembrane segment spans residues 775 to 797; sequence PIGFTMYTTCIVWLAFVPIFFGT. Over 798–810 the chain is Extracellular; the sequence is AQSAEKIYIQTTT. The chain crosses the membrane as a helical span at residues 811–836; that stretch reads LTVSLSLSASVSLGMLYVPKTYVILF. Topologically, residues 837–868 are cytoplasmic; sequence HPEQNVQKRKRSLKTTSTVAAPPKGADTEDPK. Residues 845 to 868 form a disordered region; the sequence is RKRSLKTTSTVAAPPKGADTEDPK.

Belongs to the G-protein coupled receptor 3 family. Homodimer. Interacts with GPR179. Interacts with photoreceptor synaptic protein LRIT1 (via its N-terminal extracellular domain).

The protein resides in the cell membrane. It localises to the endoplasmic reticulum membrane. Its subcellular location is the golgi apparatus membrane. The protein localises to the cell projection. It is found in the dendrite. Functionally, G-protein coupled receptor for glutamate. Ligand binding causes a conformation change that triggers signaling via guanine nucleotide-binding proteins (G proteins) and modulates the activity of down-stream effectors, such as adenylate cyclase. Signaling inhibits adenylate cyclase activity. Signaling stimulates TRPM1 channel activity and Ca(2+) uptake. Required for normal vision. This is Metabotropic glutamate receptor 6 (GRM6) from Oryctolagus cuniculus (Rabbit).